The chain runs to 866 residues: MITTVIEKIFGTKSERDLKKLKPIIEKINSLESEILKLSDEELKQKTFYFKEQLAQGKTLDDILPESFAVVREAARRVIGLRHYDVQLLGGMVLHQGKIAEMRTGEGKTLVATLPSYLNALTGKGVHVVTVNDYLAKRDRNWMGPIHEFLGLSVGYINREMDNEGRQEMYKKDITYVTNNELGFDYLRDNMVVRKEDRVLKKLNYCIVDEVDSILIDEARTPLIISGPAEQSTDKYEVVNRIIPSLKIRKITEDDEIKAKYSGENLSAGYDAVIDEKNHNATLTEDGIAKAEKFLGVANLYNDVESEWVHHINQALRAHHLYEKDVDYVVKDGEVIIVDEFTGRLMPGRRWSDGLHQAVEAKERIKIKEENQTLATITFQNFFKLYSKLSGMTGTAMTEAGEFWQIYKLDVVEVPPNRPSKRVDGADLVYRTEREKYNAIVADIETLWKKGAPVLVGTRSIEKSEKVSAMLRSKGIPHKVLNAKYHEMEAQIISQAGAKGSVTIATNMAGRGTDIVLGGNPATPQQQAEVVELGGLHILGTERHESRRIDNQLRGRAARQGDPGSSRFYISLDDELMRLFANTSRISGILERMGMTEGQVIESRLMSRQIEGAQRMVEGHNFDIRKHLLDYDKVMNQQRTAIYHLRNKILDGESVSEQVMQMIEEVIHETFDKYYNVKHPQSTDFNTLNIFLQRAFTIDANFSGESIKGKSKEQIDGETFEAVKKAFEERSKYFNEQGVNFNEVERMLLLQIIDQAWKQHLYELDQMQKSVSLRGYAQKDPLIEYQKESYNLYQNMLNKVRDVMVEYIFRLQLPPKRRVSPIGTPSSEGGGETSGADTYSNKKIGRNDPCPCGSGKKYKKCCGADL.

ATP-binding positions include Gln-87, 105 to 109, and Asp-514; that span reads GEGKT. Positions 819-858 are disordered; it reads VSPIGTPSSEGGGETSGADTYSNKKIGRNDPCPCGSGKKY. Residues Cys-850, Cys-852, Cys-861, and Cys-862 each contribute to the Zn(2+) site.

It belongs to the SecA family. In terms of assembly, monomer and homodimer. Part of the essential Sec protein translocation apparatus which comprises SecA, SecYEG and auxiliary proteins SecDF. Other proteins may also be involved. It depends on Zn(2+) as a cofactor.

The protein localises to the cell inner membrane. It localises to the cytoplasm. It catalyses the reaction ATP + H2O + cellular proteinSide 1 = ADP + phosphate + cellular proteinSide 2.. Functionally, part of the Sec protein translocase complex. Interacts with the SecYEG preprotein conducting channel. Has a central role in coupling the hydrolysis of ATP to the transfer of proteins into and across the cell membrane, serving as an ATP-driven molecular motor driving the stepwise translocation of polypeptide chains across the membrane. This is Protein translocase subunit SecA from Elusimicrobium minutum (strain Pei191).